The following is a 107-amino-acid chain: UPF0045 protein in glkA 3'region (107 aa).

This sequence belongs to the UPF0045 family.

This Staphylococcus xylosus protein is UPF0045 protein in glkA 3'region (dglA).